We begin with the raw amino-acid sequence, 297 residues long: Mitochondrial intermembrane space import and assembly protein 40 (297 aa).

The transit peptide at 1–25 (MFRPATRILLRAPGVAARGPVSRRL) directs the protein to the mitochondrion. At 26–44 (ISTAPPDAKSRSWKSTIVR) the chain is on the mitochondrial matrix side. The helical; Signal-anchor for type II membrane protein transmembrane segment at 45 to 62 (LGLAAGAVYYYNTSSVFA) threads the bilayer. Residues 63 to 297 (EQPSLSFLSK…EGTKAQQTEK (235 aa)) lie on the Mitochondrial intermembrane side of the membrane. The span at 70 to 86 (LSKQSTPDSSDETQLPT) shows a compositional bias: polar residues. Residues 70-137 (LSKQSTPDSS…PQELEDEAGQ (68 aa)) form a disordered region. Positions 90–101 (IKPRIREERQAE) are enriched in basic and acidic residues. Residues 104-114 (AVSQPDAQPTQ) show a composition bias toward polar residues. Low complexity predominate over residues 116 to 125 (EALSASEAAL). Intrachain disulfides connect cysteine 152–cysteine 154, cysteine 163–cysteine 196, and cysteine 173–cysteine 186. Residues 160–204 (HGPCGEEFKAAFSCFVYSTEEPKGMDCIDKFKGMQECFRRYPDVY) form the CHCH domain. Short sequence motifs (cx9C motif) lie at residues 163–173 (CGEEFKAAFSC) and 186–196 (CIDKFKGMQEC). The disordered stretch occupies residues 208-297 (LEDDDEADAA…EGTKAQQTEK (90 aa)). Residues 227–238 (PSEQPASPTVSA) are compositionally biased toward polar residues. Basic and acidic residues predominate over residues 249–297 (SEGKEGRAKDVHAQVKSEVAEKAEQAESDDLVPKAWHDTEGTKAQQTEK).

As to quaternary structure, monomer. It depends on Cu(2+) as a cofactor. Requires Zn(2+) as cofactor.

It is found in the mitochondrion inner membrane. Its function is as follows. Required for the import and folding of small cysteine-containing proteins (small Tim) in the mitochondrial intermembrane space (IMS). Forms a redox cycle with ERV1 that involves a disulfide relay system. Precursor proteins to be imported into the IMS are translocated in their reduced form into the mitochondria. The oxidized form of MIA40 forms a transient intermolecular disulfide bridge with the reduced precursor protein, resulting in oxidation of the precursor protein that now contains an intramolecular disulfide bond and is able to undergo folding in the IMS. The protein is Mitochondrial intermembrane space import and assembly protein 40 (mia40) of Aspergillus fumigatus (strain ATCC MYA-4609 / CBS 101355 / FGSC A1100 / Af293) (Neosartorya fumigata).